Here is a 523-residue protein sequence, read N- to C-terminus: Non-specific phospholipase C3 (523 aa).

The segment at 44 to 64 (DGVSESEPRSNPLSTSDPNSA) is disordered. A compositionally biased stretch (polar residues) spans 52–64 (RSNPLSTSDPNSA).

The protein belongs to the bacterial phospholipase C family. As to expression, expressed in root tips, cotyledons, on leaf margins, stems, young anthers and funiculus.

It catalyses the reaction a 1-acyl-sn-glycero-3-phosphate + H2O = a 1-acyl-sn-glycerol + phosphate. Possesses specific phosphatase activity toward lysophosphatidic acid (LPA) in vitro. Does not show phospholipase C activity. May play a role in signal transduction and storage lipid synthesis. May be involved in brassinolide-mediated signaling in root development. This Arabidopsis thaliana (Mouse-ear cress) protein is Non-specific phospholipase C3 (NPC3).